A 196-amino-acid chain; its full sequence is ATP-dependent Clp protease proteolytic subunit (196 aa).

The active-site Nucleophile is the Ser-101. Residue His-126 is part of the active site.

The protein belongs to the peptidase S14 family. In terms of assembly, component of the chloroplastic Clp protease core complex.

Its subcellular location is the plastid. The protein localises to the chloroplast stroma. It carries out the reaction Hydrolysis of proteins to small peptides in the presence of ATP and magnesium. alpha-casein is the usual test substrate. In the absence of ATP, only oligopeptides shorter than five residues are hydrolyzed (such as succinyl-Leu-Tyr-|-NHMec, and Leu-Tyr-Leu-|-Tyr-Trp, in which cleavage of the -Tyr-|-Leu- and -Tyr-|-Trp bonds also occurs).. Functionally, cleaves peptides in various proteins in a process that requires ATP hydrolysis. Has a chymotrypsin-like activity. Plays a major role in the degradation of misfolded proteins. This is ATP-dependent Clp protease proteolytic subunit from Arabis hirsuta (Hairy rock-cress).